Reading from the N-terminus, the 399-residue chain is Probable peptidoglycan glycosyltransferase FtsW (399 aa).

The next 9 membrane-spanning stretches (helical) occupy residues 33-53, 71-91, 98-118, 160-180, 182-202, 204-224, 287-307, 324-344, and 359-379; these read LVWLTLGLFSVGLIMVISTSI, IFYFFLIFLLSFIFLRTPIIF, IILIISIVLLVLVLLIGHSIH, FWGFFKPMSVIITQSMLLLAE, DLGTVVVLFFTTISVLFLSGA, IGQFFIIITVSILTIILLILL, IIGEELGYIGSFLILLIIFTI, IFSGFLACSIGIWLSFQTSIN, and LPFISYGGSSLIINSIAIFFL.

This sequence belongs to the SEDS family. FtsW subfamily.

It localises to the cell inner membrane. The catalysed reaction is [GlcNAc-(1-&gt;4)-Mur2Ac(oyl-L-Ala-gamma-D-Glu-L-Lys-D-Ala-D-Ala)](n)-di-trans,octa-cis-undecaprenyl diphosphate + beta-D-GlcNAc-(1-&gt;4)-Mur2Ac(oyl-L-Ala-gamma-D-Glu-L-Lys-D-Ala-D-Ala)-di-trans,octa-cis-undecaprenyl diphosphate = [GlcNAc-(1-&gt;4)-Mur2Ac(oyl-L-Ala-gamma-D-Glu-L-Lys-D-Ala-D-Ala)](n+1)-di-trans,octa-cis-undecaprenyl diphosphate + di-trans,octa-cis-undecaprenyl diphosphate + H(+). The protein operates within cell wall biogenesis; peptidoglycan biosynthesis. Its function is as follows. Peptidoglycan polymerase that is essential for cell division. This is Probable peptidoglycan glycosyltransferase FtsW from Buchnera aphidicola subsp. Acyrthosiphon pisum (strain APS) (Acyrthosiphon pisum symbiotic bacterium).